Consider the following 305-residue polypeptide: Thymidylate synthase (305 aa).

DUMP is bound by residues Arg-26 and 160-161; that span reads RR. The active-site Nucleophile is Cys-180. DUMP contacts are provided by residues 207–210, Asn-218, and 248–250; these read RSCD and HLY. Asp-210 contributes to the (6R)-5,10-methylene-5,6,7,8-tetrahydrofolate binding site. Position 304 (Ala-304) interacts with (6R)-5,10-methylene-5,6,7,8-tetrahydrofolate.

Belongs to the thymidylate synthase family. Bacterial-type ThyA subfamily. As to quaternary structure, homodimer.

Its subcellular location is the cytoplasm. The enzyme catalyses dUMP + (6R)-5,10-methylene-5,6,7,8-tetrahydrofolate = 7,8-dihydrofolate + dTMP. The protein operates within pyrimidine metabolism; dTTP biosynthesis. Functionally, catalyzes the reductive methylation of 2'-deoxyuridine-5'-monophosphate (dUMP) to 2'-deoxythymidine-5'-monophosphate (dTMP) while utilizing 5,10-methylenetetrahydrofolate (mTHF) as the methyl donor and reductant in the reaction, yielding dihydrofolate (DHF) as a by-product. This enzymatic reaction provides an intracellular de novo source of dTMP, an essential precursor for DNA biosynthesis. In Sinorhizobium fredii (strain NBRC 101917 / NGR234), this protein is Thymidylate synthase.